Reading from the N-terminus, the 502-residue chain is MIEKKYIVALDQGTTSSRAIILDHDANIISISQREFTQIYPKPGWVEHDPMEIWATQSSTLVEVLAKADISSDQIAGIGITNQRETTIIWEKETGKPIYNAIVWQCRRTADACTKLKQKEGLEEYIRQNTGLVVDPYFSGTKVKWILDNVAGARERAEKGELLFGTVDTWLVWKMTQGRVHVTDFTNASRTMLFNIHNLEWDQHILDELQIPRSLLPSVHSSSEIYGQTNIGGKGGTRIPISGIAGDQQAALYGQLCVQPGMAKNTYGTGCFLLMNTGTDAVRSNHGLLTTIACGPRGEVNYALEGAVFVGGASIQWLRDELKLIADAADSEYFATKVKNSNGVYVVPAFTGLGAPYWDPYARGSIFGLTRGTNSNHIIRATLESIAYQTRDVLDAMQADAGTRLQALRVDGGAVANNFLMQFQSDILGTRVERPVVRESTALGAAFLAGLAVGYWKDLDEVKSKATIEKEFRPGIETTERNYKYNGWKKAVARAQDWEDKG.

An ADP-binding site is contributed by Thr14. Residues Thr14, Thr15, and Ser16 each contribute to the ATP site. Sn-glycerol 3-phosphate is bound at residue Thr14. Arg18 is a binding site for ADP. Sn-glycerol 3-phosphate-binding residues include Arg84, Glu85, Tyr137, and Asp247. Glycerol contacts are provided by Arg84, Glu85, Tyr137, Asp247, and Gln248. ADP-binding residues include Thr269 and Gly312. Residues Thr269, Gly312, Gln316, and Gly413 each coordinate ATP. Gly413 and Asn417 together coordinate ADP.

Belongs to the FGGY kinase family. Homotetramer and homodimer (in equilibrium). Heterodimer with EIIA-Glc. Binds 1 zinc ion per glycerol kinase EIIA-Glc dimer. The zinc ion is important for dimerization.

It carries out the reaction glycerol + ATP = sn-glycerol 3-phosphate + ADP + H(+). Its pathway is polyol metabolism; glycerol degradation via glycerol kinase pathway; sn-glycerol 3-phosphate from glycerol: step 1/1. Activity of this regulatory enzyme is affected by several metabolites. Allosterically and non-competitively inhibited by fructose 1,6-bisphosphate (FBP) and unphosphorylated phosphocarrier protein EIIA-Glc (III-Glc), an integral component of the bacterial phosphotransferase (PTS) system. Its function is as follows. Key enzyme in the regulation of glycerol uptake and metabolism. Catalyzes the phosphorylation of glycerol to yield sn-glycerol 3-phosphate. The chain is Glycerol kinase from Photorhabdus laumondii subsp. laumondii (strain DSM 15139 / CIP 105565 / TT01) (Photorhabdus luminescens subsp. laumondii).